A 445-amino-acid chain; its full sequence is Tubulin beta chain (445 aa).

An MREI motif motif is present at residues 1–4 (MREI). GTP-binding residues include Q11, E69, S138, G142, T143, G144, N204, and N226. E69 is a binding site for Mg(2+). Positions 421–445 (EYQQYQDATAEEEGEGEEEGDEEVA) are disordered. Acidic residues predominate over residues 429-445 (TAEEEGEGEEEGDEEVA). 5-glutamyl polyglutamate is present on E438.

It belongs to the tubulin family. In terms of assembly, dimer of alpha and beta chains. A typical microtubule is a hollow water-filled tube with an outer diameter of 25 nm and an inner diameter of 15 nM. Alpha-beta heterodimers associate head-to-tail to form protofilaments running lengthwise along the microtubule wall with the beta-tubulin subunit facing the microtubule plus end conferring a structural polarity. Microtubules usually have 13 protofilaments but different protofilament numbers can be found in some organisms and specialized cells. Mg(2+) serves as cofactor. Post-translationally, some glutamate residues at the C-terminus are polyglycylated, resulting in polyglycine chains on the gamma-carboxyl group. Glycylation is mainly limited to tubulin incorporated into axonemes (cilia and flagella) whereas glutamylation is prevalent in neuronal cells, centrioles, axonemes, and the mitotic spindle. Both modifications can coexist on the same protein on adjacent residues, and lowering polyglycylation levels increases polyglutamylation, and reciprocally. The precise function of polyglycylation is still unclear. Some glutamate residues at the C-terminus are polyglutamylated, resulting in polyglutamate chains on the gamma-carboxyl group. Polyglutamylation plays a key role in microtubule severing by spastin (SPAST). SPAST preferentially recognizes and acts on microtubules decorated with short polyglutamate tails: severing activity by SPAST increases as the number of glutamates per tubulin rises from one to eight, but decreases beyond this glutamylation threshold. Brain.

The protein resides in the cytoplasm. The protein localises to the cytoskeleton. Functionally, tubulin is the major constituent of microtubules, a cylinder consisting of laterally associated linear protofilaments composed of alpha- and beta-tubulin heterodimers. Microtubules grow by the addition of GTP-tubulin dimers to the microtubule end, where a stabilizing cap forms. Below the cap, tubulin dimers are in GDP-bound state, owing to GTPase activity of alpha-tubulin. This is Tubulin beta chain from Pseudopleuronectes americanus (Winter flounder).